We begin with the raw amino-acid sequence, 322 residues long: 26S proteasome non-ATPase regulatory subunit 7 (322 aa).

Residues 9 to 144 (VVVHPLVLLS…TEAYISVEEV (136 aa)) enclose the MPN domain. Lysine 180 is covalently cross-linked (Glycyl lysine isopeptide (Lys-Gly) (interchain with G-Cter in ubiquitin)). An N6-acetyllysine mark is found at lysine 204, lysine 214, lysine 314, and lysine 315. The tract at residues 281–322 (ANRDAEKKEGQEKEDSKKDRKDDKEKEKEKSDVKKEEKKEKK) is disordered.

Belongs to the peptidase M67A family. Component of the 19S proteasome regulatory particle complex. The 26S proteasome consists of a 20S core particle (CP) and two 19S regulatory subunits (RP). The regulatory particle is made of a lid composed of 9 subunits including PSMD7, a base containing 6 ATPases and few additional components. Within the complex, PSMD7 interacts with subunit PSMD4 through their respective MPN domain. Interacts with TRIM5.

Its function is as follows. Component of the 26S proteasome, a multiprotein complex involved in the ATP-dependent degradation of ubiquitinated proteins. This complex plays a key role in the maintenance of protein homeostasis by removing misfolded or damaged proteins, which could impair cellular functions, and by removing proteins whose functions are no longer required. Therefore, the proteasome participates in numerous cellular processes, including cell cycle progression, apoptosis, or DNA damage repair. The polypeptide is 26S proteasome non-ATPase regulatory subunit 7 (PSMD7) (Bos taurus (Bovine)).